The following is a 309-amino-acid chain: Aspartate carbamoyltransferase catalytic subunit (309 aa).

The carbamoyl phosphate site is built by Arg57 and Thr58. Lys86 contacts L-aspartate. Residues Arg107, His135, and Gln138 each contribute to the carbamoyl phosphate site. L-aspartate is bound by residues Arg168 and Arg228. Residues Leu267 and Pro268 each contribute to the carbamoyl phosphate site.

This sequence belongs to the aspartate/ornithine carbamoyltransferase superfamily. ATCase family. Heterooligomer of catalytic and regulatory chains.

It catalyses the reaction carbamoyl phosphate + L-aspartate = N-carbamoyl-L-aspartate + phosphate + H(+). The protein operates within pyrimidine metabolism; UMP biosynthesis via de novo pathway; (S)-dihydroorotate from bicarbonate: step 2/3. Catalyzes the condensation of carbamoyl phosphate and aspartate to form carbamoyl aspartate and inorganic phosphate, the committed step in the de novo pyrimidine nucleotide biosynthesis pathway. In Nitrosopumilus maritimus (strain SCM1), this protein is Aspartate carbamoyltransferase catalytic subunit.